We begin with the raw amino-acid sequence, 156 residues long: Small ribosomal subunit protein uS7 (156 aa).

Belongs to the universal ribosomal protein uS7 family. In terms of assembly, part of the 30S ribosomal subunit. Contacts proteins S9 and S11.

One of the primary rRNA binding proteins, it binds directly to 16S rRNA where it nucleates assembly of the head domain of the 30S subunit. Is located at the subunit interface close to the decoding center, probably blocks exit of the E-site tRNA. In Nitrosomonas eutropha (strain DSM 101675 / C91 / Nm57), this protein is Small ribosomal subunit protein uS7.